Consider the following 95-residue polypeptide: Small ribosomal subunit protein uS17 (95 aa).

This sequence belongs to the universal ribosomal protein uS17 family. As to quaternary structure, part of the 30S ribosomal subunit.

Its function is as follows. One of the primary rRNA binding proteins, it binds specifically to the 5'-end of 16S ribosomal RNA. The polypeptide is Small ribosomal subunit protein uS17 (Synechococcus sp. (strain CC9902)).